Here is a 113-residue protein sequence, read N- to C-terminus: C-X-C motif chemokine 6 (113 aa).

Residues 1–36 form the signal peptide; the sequence is MSLLPSRAARVPGPSSSLCALLALLLLTPPGPLVSA. Intrachain disulfides connect C48–C74 and C50–C90.

It belongs to the intercrine alpha (chemokine CxC) family.

The protein resides in the secreted. Functionally, chemotactic for neutrophil granulocytes. Signals through binding and activation of its receptors (CXCR1 and CXCR2). In addition to its chemotactic and angiogenic properties, it has strong antibacterial activity against Gram-positive and Gram-negative bacteria (90-fold-higher when compared to CXCL5 and CXCL7). This chain is C-X-C motif chemokine 6 (CXCL6), found in Equus caballus (Horse).